Consider the following 406-residue polypeptide: Phosphopentomutase (406 aa).

Residues D10, D305, H310, D346, H347, and H358 each contribute to the Mn(2+) site.

It belongs to the phosphopentomutase family. Requires Mn(2+) as cofactor.

The protein localises to the cytoplasm. The enzyme catalyses 2-deoxy-alpha-D-ribose 1-phosphate = 2-deoxy-D-ribose 5-phosphate. It carries out the reaction alpha-D-ribose 1-phosphate = D-ribose 5-phosphate. Its pathway is carbohydrate degradation; 2-deoxy-D-ribose 1-phosphate degradation; D-glyceraldehyde 3-phosphate and acetaldehyde from 2-deoxy-alpha-D-ribose 1-phosphate: step 1/2. Functionally, isomerase that catalyzes the conversion of deoxy-ribose 1-phosphate (dRib-1-P) and ribose 1-phosphate (Rib-1-P) to deoxy-ribose 5-phosphate (dRib-5-P) and ribose 5-phosphate (Rib-5-P), respectively. The polypeptide is Phosphopentomutase (Rhizobium meliloti (strain 1021) (Ensifer meliloti)).